The sequence spans 353 residues: UDP-N-acetylglucosamine--N-acetylmuramyl-(pentapeptide) pyrophosphoryl-undecaprenol N-acetylglucosamine transferase (353 aa).

UDP-N-acetyl-alpha-D-glucosamine-binding positions include 10-12 (TGG), Asn-124, Ser-183, and Gln-283.

This sequence belongs to the glycosyltransferase 28 family. MurG subfamily.

It is found in the cell inner membrane. It catalyses the reaction di-trans,octa-cis-undecaprenyl diphospho-N-acetyl-alpha-D-muramoyl-L-alanyl-D-glutamyl-meso-2,6-diaminopimeloyl-D-alanyl-D-alanine + UDP-N-acetyl-alpha-D-glucosamine = di-trans,octa-cis-undecaprenyl diphospho-[N-acetyl-alpha-D-glucosaminyl-(1-&gt;4)]-N-acetyl-alpha-D-muramoyl-L-alanyl-D-glutamyl-meso-2,6-diaminopimeloyl-D-alanyl-D-alanine + UDP + H(+). It participates in cell wall biogenesis; peptidoglycan biosynthesis. In terms of biological role, cell wall formation. Catalyzes the transfer of a GlcNAc subunit on undecaprenyl-pyrophosphoryl-MurNAc-pentapeptide (lipid intermediate I) to form undecaprenyl-pyrophosphoryl-MurNAc-(pentapeptide)GlcNAc (lipid intermediate II). In Helicobacter pylori (strain HPAG1), this protein is UDP-N-acetylglucosamine--N-acetylmuramyl-(pentapeptide) pyrophosphoryl-undecaprenol N-acetylglucosamine transferase.